A 237-amino-acid polypeptide reads, in one-letter code: Phosphoribosylaminoimidazole-succinocarboxamide synthase (237 aa).

This sequence belongs to the SAICAR synthetase family.

It catalyses the reaction 5-amino-1-(5-phospho-D-ribosyl)imidazole-4-carboxylate + L-aspartate + ATP = (2S)-2-[5-amino-1-(5-phospho-beta-D-ribosyl)imidazole-4-carboxamido]succinate + ADP + phosphate + 2 H(+). Its pathway is purine metabolism; IMP biosynthesis via de novo pathway; 5-amino-1-(5-phospho-D-ribosyl)imidazole-4-carboxamide from 5-amino-1-(5-phospho-D-ribosyl)imidazole-4-carboxylate: step 1/2. The protein is Phosphoribosylaminoimidazole-succinocarboxamide synthase of Psychrobacter arcticus (strain DSM 17307 / VKM B-2377 / 273-4).